The chain runs to 109 residues: Trafficking protein particle complex subunit 2-like protein (109 aa).

Belongs to the TRAPP small subunits family. Sedlin subfamily. As to quaternary structure, component of the multisubunit TRAPP (transport protein particle) complex, which includes at least TRAPPC2, TRAPPC2L, TRAPPC3, TRAPPC3L, TRAPPC4, TRAPPC5, TRAPPC8, TRAPPC9, TRAPPC10, TRAPPC11 and TRAPPC12. Interacts with the heterodimer TRAPPC3-TRAPPC6A.

It is found in the cytoplasm. Its subcellular location is the perinuclear region. The protein localises to the endoplasmic reticulum. It localises to the golgi apparatus. Its function is as follows. May play a role in vesicular transport from endoplasmic reticulum to Golgi. In Pongo abelii (Sumatran orangutan), this protein is Trafficking protein particle complex subunit 2-like protein (TRAPPC2L).